An 85-amino-acid chain; its full sequence is UPF0297 protein LBUL_1485 (85 aa).

It belongs to the UPF0297 family.

The chain is UPF0297 protein LBUL_1485 from Lactobacillus delbrueckii subsp. bulgaricus (strain ATCC BAA-365 / Lb-18).